The sequence spans 149 residues: Arginine repressor (149 aa).

Belongs to the ArgR family.

The protein resides in the cytoplasm. It functions in the pathway amino-acid biosynthesis; L-arginine biosynthesis [regulation]. Regulates arginine biosynthesis genes. This Chlorobium phaeobacteroides (strain DSM 266 / SMG 266 / 2430) protein is Arginine repressor.